A 182-amino-acid polypeptide reads, in one-letter code: Large ribosomal subunit protein uL6 (182 aa).

This sequence belongs to the universal ribosomal protein uL6 family. In terms of assembly, part of the 50S ribosomal subunit.

Functionally, this protein binds to the 23S rRNA, and is important in its secondary structure. It is located near the subunit interface in the base of the L7/L12 stalk, and near the tRNA binding site of the peptidyltransferase center. In Nostoc sp. (strain PCC 7120 / SAG 25.82 / UTEX 2576), this protein is Large ribosomal subunit protein uL6.